Here is a 355-residue protein sequence, read N- to C-terminus: S-adenosylmethionine:tRNA ribosyltransferase-isomerase (355 aa).

It belongs to the QueA family. In terms of assembly, monomer.

The protein resides in the cytoplasm. The enzyme catalyses 7-aminomethyl-7-carbaguanosine(34) in tRNA + S-adenosyl-L-methionine = epoxyqueuosine(34) in tRNA + adenine + L-methionine + 2 H(+). Its pathway is tRNA modification; tRNA-queuosine biosynthesis. Transfers and isomerizes the ribose moiety from AdoMet to the 7-aminomethyl group of 7-deazaguanine (preQ1-tRNA) to give epoxyqueuosine (oQ-tRNA). The sequence is that of S-adenosylmethionine:tRNA ribosyltransferase-isomerase from Photorhabdus laumondii subsp. laumondii (strain DSM 15139 / CIP 105565 / TT01) (Photorhabdus luminescens subsp. laumondii).